The following is a 255-amino-acid chain: Ribosomal RNA small subunit methyltransferase G (255 aa).

The segment at 1-44 is disordered; sequence MSSPGRPKGEYRSAQHAGAVAGPPGRPDGEHRGSSGADPNGRLR. Residues Gly-118, Leu-123, 169–170, and Arg-183 contribute to the S-adenosyl-L-methionine site; that span reads VE.

The protein belongs to the methyltransferase superfamily. RNA methyltransferase RsmG family.

The protein resides in the cytoplasm. The catalysed reaction is guanosine(527) in 16S rRNA + S-adenosyl-L-methionine = N(7)-methylguanosine(527) in 16S rRNA + S-adenosyl-L-homocysteine. Specifically methylates the N7 position of guanine in position 527 of 16S rRNA. In Bordetella petrii (strain ATCC BAA-461 / DSM 12804 / CCUG 43448), this protein is Ribosomal RNA small subunit methyltransferase G.